A 485-amino-acid chain; its full sequence is Probable high-affinity nitrate transporter 2.4 (485 aa).

The next 12 membrane-spanning stretches (helical) occupy residues 56 to 76, 80 to 100, 119 to 139, 147 to 167, 177 to 197, 215 to 235, 270 to 290, 305 to 327, 341 to 361, 377 to 397, 405 to 425, and 435 to 455; these read WMSL…LPAM, LVLA…ATLV, GVAS…ASSP, FVAG…SRIF, AVAA…MPVA, VTYL…LAFP, AWLL…MENV, AAGA…GGVA, LWAL…VGRM, VACA…VPFV, VSGM…RLFF, and AISC…LIHF.

Belongs to the major facilitator superfamily. Nitrate/nitrite porter (TC 2.A.1.8) family. In terms of tissue distribution, expressed in the base of the lateral root primordia, root-shoot junction zone, leaves, ends of the husk and vascular tissue of the anthers.

The protein resides in the cell membrane. Involved in nitrate transport. This chain is Probable high-affinity nitrate transporter 2.4 (NRT2.4), found in Oryza sativa subsp. japonica (Rice).